Reading from the N-terminus, the 159-residue chain is Ribosomal RNA large subunit methyltransferase H (159 aa).

Residues leucine 76, glycine 108, and 127–132 each bind S-adenosyl-L-methionine; that span reads FSKMTF.

The protein belongs to the RNA methyltransferase RlmH family. Homodimer.

It localises to the cytoplasm. The catalysed reaction is pseudouridine(1915) in 23S rRNA + S-adenosyl-L-methionine = N(3)-methylpseudouridine(1915) in 23S rRNA + S-adenosyl-L-homocysteine + H(+). Its function is as follows. Specifically methylates the pseudouridine at position 1915 (m3Psi1915) in 23S rRNA. The protein is Ribosomal RNA large subunit methyltransferase H of Bifidobacterium longum subsp. infantis (strain ATCC 15697 / DSM 20088 / JCM 1222 / NCTC 11817 / S12).